The following is a 297-amino-acid chain: N-acetylneuraminate lyase (297 aa).

Aceneuramate is bound by residues Ser47 and Thr48. The active-site Proton donor is the Tyr137. Lys165 acts as the Schiff-base intermediate with substrate in catalysis. Aceneuramate contacts are provided by Thr167, Gly189, Asp191, Glu192, and Ser208.

This sequence belongs to the DapA family. NanA subfamily. In terms of assembly, homotetramer.

The protein resides in the cytoplasm. The enzyme catalyses aceneuramate = aldehydo-N-acetyl-D-mannosamine + pyruvate. Its pathway is amino-sugar metabolism; N-acetylneuraminate degradation; D-fructose 6-phosphate from N-acetylneuraminate: step 1/5. In terms of biological role, catalyzes the reversible aldol cleavage of N-acetylneuraminic acid (sialic acid; Neu5Ac) to form pyruvate and N-acetylmannosamine (ManNAc) via a Schiff base intermediate. The sequence is that of N-acetylneuraminate lyase from Escherichia coli (strain SMS-3-5 / SECEC).